Reading from the N-terminus, the 132-residue chain is Small ribosomal subunit protein uS11 (132 aa).

Belongs to the universal ribosomal protein uS11 family. In terms of assembly, part of the 30S ribosomal subunit. Interacts with proteins S7 and S18. Binds to IF-3.

Its function is as follows. Located on the platform of the 30S subunit, it bridges several disparate RNA helices of the 16S rRNA. Forms part of the Shine-Dalgarno cleft in the 70S ribosome. This is Small ribosomal subunit protein uS11 from Clostridioides difficile (strain 630) (Peptoclostridium difficile).